The primary structure comprises 198 residues: MEAFHTHTGIGVPLRRSNVDTDQIIPAVYLKRVTRTGFEDGLFASWRSDPSFVLNLSPFDRGSVLVAGPDFGTGSSREHAVWALMDYGFRVVISSRFGDIFRGNAGKAGLLAAEVSQDGVELLWKLIEQSPGLEITANLQDRNITAGTTVLPFKIDDHTAWRLLEGLDDIALTLRKLDRIESYEAAYPDWKPRTSPVA.

Belongs to the LeuD family. LeuD type 1 subfamily. Heterodimer of LeuC and LeuD.

It carries out the reaction (2R,3S)-3-isopropylmalate = (2S)-2-isopropylmalate. Its pathway is amino-acid biosynthesis; L-leucine biosynthesis; L-leucine from 3-methyl-2-oxobutanoate: step 2/4. Catalyzes the isomerization between 2-isopropylmalate and 3-isopropylmalate, via the formation of 2-isopropylmaleate. The protein is 3-isopropylmalate dehydratase small subunit of Mycobacterium avium (strain 104).